The chain runs to 156 residues: Cytochrome c-type biogenesis protein CcmE (156 aa).

The Cytoplasmic segment spans residues 1–16 (MNATKAPGGIKPKHQR). The chain crosses the membrane as a helical; Signal-anchor for type II membrane protein span at residues 17-37 (LVLLVIALVALIGAGLLAAYA). Residues 38–156 (LSNQASYFYV…QAEAVVAETK (119 aa)) are Periplasmic-facing. Heme contacts are provided by His-131 and Tyr-135.

This sequence belongs to the CcmE/CycJ family.

The protein resides in the cell inner membrane. Its function is as follows. Heme chaperone required for the biogenesis of c-type cytochromes. Transiently binds heme delivered by CcmC and transfers the heme to apo-cytochromes in a process facilitated by CcmF and CcmH. The polypeptide is Cytochrome c-type biogenesis protein CcmE (Novosphingobium aromaticivorans (strain ATCC 700278 / DSM 12444 / CCUG 56034 / CIP 105152 / NBRC 16084 / F199)).